A 438-amino-acid polypeptide reads, in one-letter code: Serine hydroxymethyltransferase (438 aa).

133–135 (GHI) contributes to the (6S)-5,6,7,8-tetrahydrofolate binding site. The residue at position 239 (K239) is an N6-(pyridoxal phosphate)lysine.

The protein belongs to the SHMT family. In terms of assembly, homodimer. Pyridoxal 5'-phosphate serves as cofactor.

The protein localises to the cytoplasm. It carries out the reaction 5,10-methylenetetrahydromethanopterin + glycine + H2O = 5,6,7,8-tetrahydromethanopterin + L-serine. The protein operates within amino-acid biosynthesis; glycine biosynthesis; glycine from L-serine: step 1/1. In terms of biological role, catalyzes the reversible interconversion of serine and glycine with tetrahydromethanopterin (H4MPT) serving as the one-carbon carrier. Also exhibits a pteridine-independent aldolase activity toward beta-hydroxyamino acids, producing glycine and aldehydes, via a retro-aldol mechanism. This chain is Serine hydroxymethyltransferase, found in Archaeoglobus fulgidus (strain ATCC 49558 / DSM 4304 / JCM 9628 / NBRC 100126 / VC-16).